We begin with the raw amino-acid sequence, 258 residues long: Type III pantothenate kinase (258 aa).

Residue Asp6–Val13 coordinates ATP. Residues Tyr100 and Gly107–Arg110 contribute to the substrate site. The active-site Proton acceptor is the Asp109. Asp129 lines the K(+) pocket. An ATP-binding site is contributed by Thr132. Thr185 is a binding site for substrate.

It belongs to the type III pantothenate kinase family. As to quaternary structure, homodimer. NH4(+) is required as a cofactor. It depends on K(+) as a cofactor.

The protein resides in the cytoplasm. It carries out the reaction (R)-pantothenate + ATP = (R)-4'-phosphopantothenate + ADP + H(+). It participates in cofactor biosynthesis; coenzyme A biosynthesis; CoA from (R)-pantothenate: step 1/5. In terms of biological role, catalyzes the phosphorylation of pantothenate (Pan), the first step in CoA biosynthesis. The protein is Type III pantothenate kinase of Syntrophobacter fumaroxidans (strain DSM 10017 / MPOB).